The primary structure comprises 146 residues: Protein phosphatase 1 regulatory subunit 14D (146 aa).

Positions 1–16 (MLSSSAASCTSPNPDT) are enriched in polar residues. Residues 1-57 (MLSSSAASCTSPNPDTDNPDKKVRWSSEKRRRASSTDSESKTHLDISKLPRSRRPSR) form a disordered region. 2 stretches are compositionally biased toward basic and acidic residues: residues 18–28 (NPDKKVRWSSE) and 38–48 (SESKTHLDISK). The interaction with protein phosphatase 1 stretch occupies residues 21–25 (KKVRW).

This sequence belongs to the PP1 inhibitor family. Post-translationally, phosphorylated on several residues.

The protein localises to the cytoplasm. Its function is as follows. Inhibitor of PPP1CA. Has inhibitory activity only when phosphorylated, creating a molecular switch for regulating the phosphorylation status of PPP1CA substrates and smooth muscle contraction. The sequence is that of Protein phosphatase 1 regulatory subunit 14D (Ppp1r14d) from Rattus norvegicus (Rat).